A 172-amino-acid polypeptide reads, in one-letter code: 5'(3')-deoxyribonucleotidase (172 aa).

The active-site Nucleophile is aspartate 8. Residues aspartate 8, aspartate 10, and aspartate 132 each contribute to the Mg(2+) site. Aspartate 10 acts as the Proton donor in catalysis.

It belongs to the 5'(3')-deoxyribonucleotidase family. Requires Mg(2+) as cofactor.

In terms of biological role, dephosphorylates nucleoside monophosphates such as the 5' and 2'(3')-phosphates of deoxyribonucleotides in vitro. Also catalyzes the dephosphorylation of coenzyme A (CoA), pyridoxal-5'-phosphate (PLP), riboflavine-5-phosphate (FMN) and nicotinamide adenine dinucleotide phosphate (NADP) in vitro. The sequence is that of 5'(3')-deoxyribonucleotidase (yorS) from Bacillus subtilis (strain 168).